The sequence spans 341 residues: Large ribosomal subunit protein uL29m (341 aa).

Positions 44–74 are disordered; the sequence is LARTRYTKPKPKPPRRSKVRAPTQTTHHDTD. Residues 48–62 are compositionally biased toward basic residues; that stretch reads RYTKPKPKPPRRSKV.

It belongs to the universal ribosomal protein uL29 family. Component of the mitochondrial large ribosomal subunit. Mature mitochondrial ribosomes consist of a small (37S) and a large (54S) subunit. The 37S subunit contains at least 33 different proteins and 1 molecule of RNA (15S). The 54S subunit contains at least 45 different proteins and 1 molecule of RNA (21S).

It is found in the mitochondrion. The protein is Large ribosomal subunit protein uL29m (MRPL4) of Eremothecium gossypii (strain ATCC 10895 / CBS 109.51 / FGSC 9923 / NRRL Y-1056) (Yeast).